Reading from the N-terminus, the 387-residue chain is Succinyl-diaminopimelate desuccinylase (387 aa).

His74 contacts Zn(2+). Asp76 is an active-site residue. Asp107 contacts Zn(2+). Residue Glu142 is the Proton acceptor of the active site. Zn(2+)-binding residues include Glu143, Glu171, and His360.

This sequence belongs to the peptidase M20A family. DapE subfamily. In terms of assembly, homodimer. Zn(2+) is required as a cofactor. It depends on Co(2+) as a cofactor.

The enzyme catalyses N-succinyl-(2S,6S)-2,6-diaminopimelate + H2O = (2S,6S)-2,6-diaminopimelate + succinate. It functions in the pathway amino-acid biosynthesis; L-lysine biosynthesis via DAP pathway; LL-2,6-diaminopimelate from (S)-tetrahydrodipicolinate (succinylase route): step 3/3. In terms of biological role, catalyzes the hydrolysis of N-succinyl-L,L-diaminopimelic acid (SDAP), forming succinate and LL-2,6-diaminopimelate (DAP), an intermediate involved in the bacterial biosynthesis of lysine and meso-diaminopimelic acid, an essential component of bacterial cell walls. The protein is Succinyl-diaminopimelate desuccinylase of Rhodopseudomonas palustris (strain TIE-1).